We begin with the raw amino-acid sequence, 95 residues long: MAVTRTALLVVLVAGAMTMTMRGAEAQQPSCAAQLTQLAPCARVGVAPAPGQPLPAPPAECCSALGAVSHDCACGTLDIINSLPAKCGLPRVTCQ.

The first 26 residues, Met1–Ala26, serve as a signal peptide directing secretion. Cystine bridges form between Cys31/Cys72, Cys41/Cys61, Cys62/Cys87, and Cys74/Cys94.

The protein belongs to the A9/FIL1 family. In terms of tissue distribution, anther.

Its subcellular location is the secreted. The polypeptide is Protein YY1 (Oryza sativa subsp. japonica (Rice)).